The primary structure comprises 270 residues: tRNA pseudouridine synthase A (270 aa).

Asp-60 (nucleophile) is an active-site residue. Positions 107-111 are RNA binding; the sequence is FHARF. Tyr-118 is a binding site for substrate. The segment at 168–172 is interaction with tRNA; sequence QCQSR.

The protein belongs to the tRNA pseudouridine synthase TruA family. As to quaternary structure, homodimer.

It catalyses the reaction uridine(38/39/40) in tRNA = pseudouridine(38/39/40) in tRNA. In terms of biological role, formation of pseudouridine at positions 38, 39 and 40 in the anticodon stem and loop of transfer RNAs. This Escherichia coli (strain 55989 / EAEC) protein is tRNA pseudouridine synthase A.